Consider the following 1070-residue polypeptide: Granule associated Rac and RHOG effector protein 1 (1070 aa).

Disordered regions lie at residues 681-771 (EQKA…VGAG), 855-992 (SQAM…STLP), and 1032-1070 (SYVQ…LPQY). The span at 692–702 (PSLPVPPPPRA) shows a compositional bias: pro residues. Low complexity-rich tracts occupy residues 719–742 (PQQQ…QPIG), 906–924 (AQGD…NGDS), and 951–962 (TSTLPSPPLLTT). The residue at position 723 (S723) is a Phosphoserine. Positions 977 to 992 (PKAPWQHPSPLPSTLP) are enriched in pro residues. Positions 1046 to 1058 (HKAAPKGFKAFPG) are enriched in low complexity.

Interacts with AGO2 and TNRC6A.

The protein resides in the cytoplasm. Its subcellular location is the P-body. Its function is as follows. Acts as an effector of RAC1. Associates with CCR4-NOT complex which is one of the major cellular mRNA deadenylases and is linked to various cellular processes including bulk mRNA degradation, miRNA-mediated repression, translational repression during translational initiation and general transcription regulation. May also play a role in miRNA silencing machinery. This chain is Granule associated Rac and RHOG effector protein 1, found in Homo sapiens (Human).